Here is a 407-residue protein sequence, read N- to C-terminus: Argininosuccinate synthase (407 aa).

Residues 13-21 and A40 contribute to the ATP site; that span reads AYSGGLDTS. Y91 and S96 together coordinate L-citrulline. Residue G121 participates in ATP binding. L-aspartate-binding residues include T123, N127, and D128. Residue N127 participates in L-citrulline binding. L-citrulline contacts are provided by R131, S182, S191, E267, and Y279.

This sequence belongs to the argininosuccinate synthase family. Type 1 subfamily. As to quaternary structure, homotetramer.

The protein localises to the cytoplasm. It catalyses the reaction L-citrulline + L-aspartate + ATP = 2-(N(omega)-L-arginino)succinate + AMP + diphosphate + H(+). It functions in the pathway amino-acid biosynthesis; L-arginine biosynthesis; L-arginine from L-ornithine and carbamoyl phosphate: step 2/3. This is Argininosuccinate synthase from Agrobacterium fabrum (strain C58 / ATCC 33970) (Agrobacterium tumefaciens (strain C58)).